A 215-amino-acid polypeptide reads, in one-letter code: Kunitz trypsin inhibitor 4 (215 aa).

Positions Met1–Gly28 are cleaved as a signal peptide. 2 disulfide bridges follow: Cys66–Cys112 and Cys165–Cys176. N-linked (GlcNAc...) asparagine glycosylation occurs at Asn206.

Belongs to the protease inhibitor I3 (leguminous Kunitz-type inhibitor) family. Expressed in roots.

It is found in the endoplasmic reticulum. In terms of biological role, exhibits Kunitz trypsin protease inhibitor activity. Involved in modulating programmed cell death (PCD) in plant-pathogen interactions. Can inhibit both serine proteases and cysteine proteases. May be involved in the modulation of the proteases that participate in the hydrolysis of dietary proteins in the gut of spider mites. This is Kunitz trypsin inhibitor 4 from Arabidopsis thaliana (Mouse-ear cress).